Reading from the N-terminus, the 97-residue chain is Cornifin (97 aa).

The tract at residues 1–42 (MSSQQQKQPCTPPPQPQQQQVKQPCQPPPQEPCVPKTKEPCH) is disordered. The residue at position 2 (Ser-2) is an N-acetylserine. Tandem repeats lie at residues 3–14 (SQQQKQPCTPPP), 18–29 (QQQVKQPCQPPP), 31–38 (EPCVPKTK), 39–46 (EPCHPKVP), 47–54 (EPCQPKVP), 55–62 (EPCQPKVP), 63–70 (EPCHPKVP), 71–78 (EPCQPKVP), and 79–85 (EPCPSPV). Residues 3 to 29 (SQQQKQPCTPPPQPQQQQVKQPCQPPP) form a 2 X 12 AA approximate repeats region. A 7 X 8 AA approximate tandem repeats region spans residues 31–85 (EPCVPKTKEPCHPKVPEPCQPKVPEPCQPKVPEPCHPKVPEPCQPKVPEPCPSPV).

This sequence belongs to the cornifin (SPRR) family. Not detected in normal lung tissue but seen in tumor tissues. Cells around the keratin pearls contain high levels.

Its subcellular location is the cytoplasm. Its function is as follows. Cross-linked envelope protein of keratinocytes. It is a keratinocyte protein that first appears in the cell cytosol, but ultimately becomes cross-linked to membrane proteins by transglutaminase. All that results in the formation of an insoluble envelope beneath the plasma membrane. This Sus scrofa (Pig) protein is Cornifin (SPRP).